The following is a 524-amino-acid chain: Lysine--tRNA ligase (524 aa).

Mg(2+) is bound by residues E433 and E440.

Belongs to the class-II aminoacyl-tRNA synthetase family. As to quaternary structure, homodimer. It depends on Mg(2+) as a cofactor.

It is found in the cytoplasm. The enzyme catalyses tRNA(Lys) + L-lysine + ATP = L-lysyl-tRNA(Lys) + AMP + diphosphate. This chain is Lysine--tRNA ligase, found in Colwellia psychrerythraea (strain 34H / ATCC BAA-681) (Vibrio psychroerythus).